We begin with the raw amino-acid sequence, 505 residues long: Glycerol kinase (505 aa).

Threonine 15 serves as a coordination point for ADP. ATP-binding residues include threonine 15, threonine 16, and serine 17. Threonine 15 is a sn-glycerol 3-phosphate binding site. Arginine 19 is an ADP binding site. Arginine 85, glutamate 86, tyrosine 136, and aspartate 249 together coordinate sn-glycerol 3-phosphate. 5 residues coordinate glycerol: arginine 85, glutamate 86, tyrosine 136, aspartate 249, and glutamine 250. Residues threonine 271 and glycine 314 each coordinate ADP. Residues threonine 271, glycine 314, glutamine 318, and glycine 415 each contribute to the ATP site. ADP is bound by residues glycine 415 and asparagine 419.

It belongs to the FGGY kinase family.

The catalysed reaction is glycerol + ATP = sn-glycerol 3-phosphate + ADP + H(+). It participates in polyol metabolism; glycerol degradation via glycerol kinase pathway; sn-glycerol 3-phosphate from glycerol: step 1/1. With respect to regulation, inhibited by fructose 1,6-bisphosphate (FBP). Key enzyme in the regulation of glycerol uptake and metabolism. Catalyzes the phosphorylation of glycerol to yield sn-glycerol 3-phosphate. This chain is Glycerol kinase, found in Mycoplasma mycoides subsp. mycoides SC (strain CCUG 32753 / NCTC 10114 / PG1).